The primary structure comprises 1038 residues: Probable ubiquitin conjugation factor E4 (1038 aa).

Disordered stretches follow at residues 430–459 (ANDAGRENGNESRLLQSKEATSSSSNASGQ) and 1010–1038 (SHQSKKRTSGEDSSNKERIQTTNSDMLID). A compositionally biased stretch (low complexity) spans 446 to 459 (SKEATSSSSNASGQ). Residues 940 to 1014 (EIPDEFLDPI…DEFVKSHQSK (75 aa)) enclose the U-box domain. Over residues 1017-1028 (TSGEDSSNKERI) the composition is skewed to basic and acidic residues. Residues 1029–1038 (QTTNSDMLID) are compositionally biased toward polar residues.

The protein belongs to the ubiquitin conjugation factor E4 family.

Its subcellular location is the cytoplasm. It localises to the nucleus. It carries out the reaction S-ubiquitinyl-[E2 ubiquitin-conjugating enzyme]-L-cysteine + [acceptor protein]-L-lysine = [E2 ubiquitin-conjugating enzyme]-L-cysteine + N(6)-ubiquitinyl-[acceptor protein]-L-lysine.. Its pathway is protein modification; protein ubiquitination. In terms of biological role, ubiquitin-protein ligase that may function as an E3 ligase in conjunction with specific E1 and E2 ligases. May also function as an E4 ligase mediating the assembly of polyubiquitin chain assembly on substrates monoubiquitinated by another E3 ubiquitin ligase. This is Probable ubiquitin conjugation factor E4 (PUB1) from Arabidopsis thaliana (Mouse-ear cress).